Reading from the N-terminus, the 444-residue chain is Tubulin beta-6 chain (444 aa).

Gln11, Glu69, Ser138, Gly142, Thr143, Gly144, Asn204, and Asn226 together coordinate GTP. Glu69 provides a ligand contact to Mg(2+).

Belongs to the tubulin family. Dimer of alpha and beta chains. A typical microtubule is a hollow water-filled tube with an outer diameter of 25 nm and an inner diameter of 15 nM. Alpha-beta heterodimers associate head-to-tail to form protofilaments running lengthwise along the microtubule wall with the beta-tubulin subunit facing the microtubule plus end conferring a structural polarity. Microtubules usually have 13 protofilaments but different protofilament numbers can be found in some organisms and specialized cells. The cofactor is Mg(2+). In terms of tissue distribution, expressed in roots, leaf sheaths, anthers, and suspension cultured cells.

It is found in the cytoplasm. Its subcellular location is the cytoskeleton. Tubulin is the major constituent of microtubules, a cylinder consisting of laterally associated linear protofilaments composed of alpha- and beta-tubulin heterodimers. Microtubules grow by the addition of GTP-tubulin dimers to the microtubule end, where a stabilizing cap forms. Below the cap, tubulin dimers are in GDP-bound state, owing to GTPase activity of alpha-tubulin. The protein is Tubulin beta-6 chain (TUBB6) of Oryza sativa subsp. japonica (Rice).